The sequence spans 131 residues: UPF0102 protein YraN (131 aa).

Over residues 1 to 19 (MATVPTRSGSPRQLTTKQT) the composition is skewed to polar residues. The tract at residues 1 to 20 (MATVPTRSGSPRQLTTKQTG) is disordered.

Belongs to the UPF0102 family.

This is UPF0102 protein YraN from Escherichia coli (strain 55989 / EAEC).